The following is a 362-amino-acid chain: Cytochrome c oxidase subunit 2 (362 aa).

Residues 1–28 form the signal peptide; that stretch reads MEQQEKRGTVRKALLGSVIGFGGLALAG. Cysteine 29 carries N-palmitoyl cysteine lipidation. Cysteine 29 carries S-diacylglycerol cysteine lipidation. 2 consecutive transmembrane segments (helical) span residues 60–80 and 107–127; these read FWVW…GLFI and IPLE…LFFF. The tract at residues 171–206 is disordered; that stretch reads SDYVGTDEKRQEAAEKTKFDQGGDNPNPINGRSKTD. The segment covering 176–191 has biased composition (basic and acidic residues); it reads TDEKRQEAAEKTKFDQ. The segment covering 197-206 has biased composition (polar residues); sequence NPINGRSKTD. Residues histidine 246, cysteine 287, glutamate 289, cysteine 291, histidine 295, and methionine 298 each contribute to the Cu cation site. The segment at 325 to 362 is disordered; sequence NSDALKSIGEAPYATSTHPFNSERATRDGANFDDTAAA.

Belongs to the cytochrome c oxidase subunit 2 family. As to quaternary structure, associates with subunits I, III and IV to form cytochrome c oxidase. Binuclear copper center (CuA) serves as cofactor.

Its subcellular location is the cell membrane. The catalysed reaction is 4 Fe(II)-[cytochrome c] + O2 + 8 H(+)(in) = 4 Fe(III)-[cytochrome c] + 2 H2O + 4 H(+)(out). Its function is as follows. Subunits I and II form the functional core of the enzyme complex. Electrons originating in cytochrome c are transferred via heme a and Cu(A) to the binuclear center formed by heme a3 and Cu(B). The protein is Cytochrome c oxidase subunit 2 (ctaC) of Corynebacterium diphtheriae (strain ATCC 700971 / NCTC 13129 / Biotype gravis).